Reading from the N-terminus, the 98-residue chain is MPRIVNPLDEMLFKEVLKEQQRIRVYTERARYGKIKTIIEGIDEKEFDLEEIAKKLKAKLACGGTAKNGRIELQGDHRDRIKKLLVELGFSEELIEVE.

It belongs to the SUI1 family.

This Pyrococcus furiosus (strain ATCC 43587 / DSM 3638 / JCM 8422 / Vc1) protein is Protein translation factor SUI1 homolog.